The following is a 150-amino-acid chain: Ribosome maturation factor RimP (150 aa).

Belongs to the RimP family.

The protein resides in the cytoplasm. Functionally, required for maturation of 30S ribosomal subunits. The polypeptide is Ribosome maturation factor RimP (Thermotoga neapolitana (strain ATCC 49049 / DSM 4359 / NBRC 107923 / NS-E)).